Here is a 222-residue protein sequence, read N- to C-terminus: UPF0585 protein CG18661 (222 aa).

Belongs to the UPF0585 family.

The sequence is that of UPF0585 protein CG18661 from Drosophila melanogaster (Fruit fly).